Reading from the N-terminus, the 223-residue chain is Glutathione S-transferase 4 (223 aa).

Blocked amino end (Ala) is present on Ala2. One can recognise a GST N-terminal domain in the interval 4–85; that stretch reads PAVKVYGWAI…HVLRKHKPEL (82 aa). Residues Ser14, 43–44, 56–57, and 69–70 each bind glutathione; these read HR, KV, and ES. The region spanning 90–223 is the GST C-terminal domain; the sequence is RLEQTAMVDV…VGAGAPKEQE (134 aa).

This sequence belongs to the GST superfamily. Phi family. Homodimer or heterodimer of GST-I and GST-IV (=GST-II). Seedling roots.

The catalysed reaction is RX + glutathione = an S-substituted glutathione + a halide anion + H(+). Its function is as follows. Conjugation of reduced glutathione to a wide number of exogenous and endogenous hydrophobic electrophiles. Involved in the detoxification of certain herbicides. Most active with substrates possessing a chloroacetamide structure. Trans-cinnamic acid and 1-chloro-2,4-dinitrobenzene are not effective substrates. May play an important role in the benoxacor-mediated protection of maize from metolachlor injury. In Zea mays (Maize), this protein is Glutathione S-transferase 4 (GST4).